The following is a 535-amino-acid chain: MAALGCARLRWALLGPRVAGCGLCPQGARAKAAIPTALPADEAAQAPGAGPGDRRRRRSLEELPRLGQLRFFYQAFVQGYLLHLHKLQVLNKARYGPMWVSYLGPQLFVNLASAPLVETVMRQEGKYPVRNDMQLWKEHRDHQDLAYGVFTTDGHDWYQLRQALNQRLLKPAEAALYTDALNEVIDSFVVRLDQLRAESASGDQVPDMADLLYHFALEAICYILFEKRIGCLEASIPKDTENFIRSVGLMFQNSVYVTFLPKWTRPLLPFWKRYLDGWDTIFSFGKNLIDQKLQEVVAQLQSAGSDGVQVSGYLHSLLTSGQLSPREALGSLPELLLAGVDTTSNTLTWALYHLSKNPEIQAALRKEVVGVVAAGQVPQHKDFAHMPLLKAVLKETLRLYPVIPANSRIIVDKEIEVGGFLFPKNTQFVFCHYVTSRDPSTFSEPDTFWPYRWLRKGQPETSKTQHPFGSVPFGYGVRACLGRRIAELEMQLLLARLIQRYELMLAPETGEVQSVARIVLVPNKKVGLRFLPTQR.

A mitochondrion-targeting transit peptide spans 1–36 (MAALGCARLRWALLGPRVAGCGLCPQGARAKAAIPT). K286 carries the N6-acetyllysine modification. A sterol-binding region spans residues 387–401 (PLLKAVLKETLRLYP). C480 is a binding site for heme. K524 is modified (N6-acetyllysine).

The protein belongs to the cytochrome P450 family. Interacts with HSP70; this interaction is required for initial targeting to mitochondria. The cofactor is heme. In terms of tissue distribution, expressed in all tissues tested. Highest expression in liver and duodenum, followed by adrenal gland and lung. Low expression in kidney and spleen.

The protein resides in the mitochondrion inner membrane. It catalyses the reaction 5beta-cholestane-3alpha,7alpha,12alpha-triol + 6 reduced [adrenodoxin] + 3 O2 + 5 H(+) = (25R)-3alpha,7alpha,12alpha-trihydroxy-5beta-cholestan-26-oate + 6 oxidized [adrenodoxin] + 4 H2O. The enzyme catalyses cholestanol + 2 reduced [adrenodoxin] + O2 + 2 H(+) = (25R)-26-hydroxycholestanol + 2 oxidized [adrenodoxin] + H2O. It carries out the reaction (25R)-3beta-hydroxycholest-5-en-7-one-26-al + 2 reduced [adrenodoxin] + O2 + H(+) = (25R)-3beta-hydroxycholest-5-en-7-one-26-oate + 2 oxidized [adrenodoxin] + H2O. The catalysed reaction is (25R)-3beta,26-dihydroxycholest-5-en-7-one + 2 reduced [adrenodoxin] + O2 + 2 H(+) = (25R)-3beta-hydroxycholest-5-en-7-one-26-al + 2 oxidized [adrenodoxin] + 2 H2O. It catalyses the reaction 7-oxocholesterol + 2 reduced [adrenodoxin] + O2 + 2 H(+) = (25R)-3beta,26-dihydroxycholest-5-en-7-one + 2 oxidized [adrenodoxin] + H2O. The enzyme catalyses calciol + 2 reduced [adrenodoxin] + O2 + 2 H(+) = calcidiol + 2 oxidized [adrenodoxin] + H2O. It carries out the reaction (25R)-5beta-cholestane-3alpha,7alpha,12alpha,26-tetrol + 2 reduced [adrenodoxin] + O2 + 2 H(+) = (25R)-3alpha,7alpha,12alpha-trihydroxy-5beta-cholestan-26-al + 2 oxidized [adrenodoxin] + 2 H2O. The catalysed reaction is 2 reduced [adrenodoxin] + cholesterol + O2 + 2 H(+) = (25R)-cholest-5-ene-3beta,26-diol + 2 oxidized [adrenodoxin] + H2O. It catalyses the reaction (25R)-3beta,4beta-dihydroxycholest-5-en-26-al + 2 reduced [adrenodoxin] + O2 + H(+) = (25R)-3beta,4beta-dihydroxycholest-5-en-26-oate + 2 oxidized [adrenodoxin] + H2O. The enzyme catalyses (25R)-4beta,26-dihydroxycholesterol + 2 reduced [adrenodoxin] + O2 + 2 H(+) = (25R)-3beta,4beta-dihydroxycholest-5-en-26-al + 2 oxidized [adrenodoxin] + 2 H2O. It carries out the reaction 4beta-hydroxycholesterol + 2 reduced [adrenodoxin] + O2 + 2 H(+) = (25R)-4beta,26-dihydroxycholesterol + 2 oxidized [adrenodoxin] + H2O. The catalysed reaction is (25R)-3beta-hydroxy-5-cholesten-26-al + 2 reduced [adrenodoxin] + O2 + H(+) = (25R)-3beta-hydroxy-5-cholestenoate + 2 oxidized [adrenodoxin] + H2O. It catalyses the reaction (25R)-cholest-5-ene-3beta,26-diol + 2 reduced [adrenodoxin] + O2 + 2 H(+) = (25R)-3beta-hydroxy-5-cholesten-26-al + 2 oxidized [adrenodoxin] + 2 H2O. The enzyme catalyses (25R)-3alpha,7alpha,12alpha-trihydroxy-5beta-cholestan-26-al + 2 reduced [adrenodoxin] + O2 + H(+) = (25R)-3alpha,7alpha,12alpha-trihydroxy-5beta-cholestan-26-oate + 2 oxidized [adrenodoxin] + H2O. It carries out the reaction 5beta-cholestane-3alpha,7alpha,12alpha-triol + 2 reduced [adrenodoxin] + O2 + 2 H(+) = (25R)-5beta-cholestane-3alpha,7alpha,12alpha,26-tetrol + 2 oxidized [adrenodoxin] + H2O. The protein operates within hormone biosynthesis; cholecalciferol biosynthesis. It participates in steroid metabolism; cholesterol degradation. Its pathway is lipid metabolism; bile acid biosynthesis. Its function is as follows. Cytochrome P450 monooxygenase that catalyzes regio- and stereospecific hydroxylation of cholesterol and its derivatives. Hydroxylates (with R stereochemistry) the terminal methyl group of cholesterol side-chain in a three step reaction to yield at first a C26 alcohol, then a C26 aldehyde and finally a C26 acid. Regulates cholesterol homeostasis by catalyzing the conversion of excess cholesterol to bile acids via both the 'neutral' (classic) and the 'acid' (alternative) pathways. May also regulate cholesterol homeostasis via generation of active oxysterols, which act as ligands for NR1H2 and NR1H3 nuclear receptors, modulating the transcription of genes involved in lipid metabolism. Plays a role in cholestanol metabolism in the cerebellum. Similarly to cholesterol, hydroxylates cholestanol and may facilitate sterol diffusion through the blood-brain barrier to the systemic circulation for further degradation. Also hydroxylates retinal 7-ketocholesterol, a noxious oxysterol with pro-inflammatory and pro-apoptotic effects, and may play a role in its elimination from the retinal pigment epithelium. May play a redundant role in vitamin D biosynthesis. Catalyzes 25-hydroxylation of vitamin D3 that is required for its conversion to a functionally active form. This Oryctolagus cuniculus (Rabbit) protein is Sterol 26-hydroxylase, mitochondrial (CYP27A1).